We begin with the raw amino-acid sequence, 1100 residues long: Lysylphosphatidylglycerol biosynthesis bifunctional protein LysX (1100 aa).

Positions 1-601 (MTPTSLARAR…LLHSDGTAPD (601 aa)) are phosphatidylglycerol lysyltransferase. 7 helical membrane passes run 18–38 (VPAA…LASV), 60–80 (FPDT…ALAA), 84–104 (IAWW…IAGL), 112–132 (FAEV…AFLL), 154–174 (LVAS…LFPG), 206–226 (VFVN…TAIV), and 314–332 (AYGW…AQAF). The lysine--tRNA ligase stretch occupies residues 602 to 1100 (GMGLQADLAD…TLPFPLAKPR (499 aa)). A DNA-binding region (OB) is located at residues 661–739 (VAVAGRVLRS…SLLVSGWRLI (79 aa)). Mg(2+) contacts are provided by aspartate 1012 and glutamate 1019.

It in the N-terminal section; belongs to the LPG synthetase family. This sequence in the C-terminal section; belongs to the class-II aminoacyl-tRNA synthetase family. It depends on Mg(2+) as a cofactor.

The protein resides in the cell membrane. The catalysed reaction is tRNA(Lys) + L-lysine + ATP = L-lysyl-tRNA(Lys) + AMP + diphosphate. It catalyses the reaction L-lysyl-tRNA(Lys) + a 1,2-diacyl-sn-glycero-3-phospho-(1'-sn-glycerol) = a 1,2-diacyl-sn-glycero-3-phospho-1'-(3'-O-L-lysyl)-sn-glycerol + tRNA(Lys). Its function is as follows. Catalyzes the production of L-lysyl-tRNA(Lys)transfer and the transfer of a lysyl group from L-lysyl-tRNA(Lys) to membrane-bound phosphatidylglycerol (PG), which produces lysylphosphatidylglycerol (LPG), one of the components of the bacterial membrane with a positive net charge. LPG synthesis contributes to the resistance to cationic antimicrobial peptides (CAMPs) and likely protects M.tuberculosis against the CAMPs produced by competiting microorganisms (bacteriocins). In fact, the modification of anionic phosphatidylglycerol with positively charged L-lysine results in repulsion of the peptides. The chain is Lysylphosphatidylglycerol biosynthesis bifunctional protein LysX (lysX) from Mycolicibacterium vanbaalenii (strain DSM 7251 / JCM 13017 / BCRC 16820 / KCTC 9966 / NRRL B-24157 / PYR-1) (Mycobacterium vanbaalenii).